Reading from the N-terminus, the 452-residue chain is MQRRIFGIETEFGVTCTFHGQRRLSPDEVARYLFRRVVSWGRSSNVFLRNGSRLYLDVGSHPEYATAECDDLAQLVSHDKAGERILEDLLVDAERRLADEGIGGDIFLFKNNTDSAGNSYGCHENYLVARAGEFSRIADVLLPFLVTRQLICGAGKVLQTPRGAVYCLSQRAEHIWEGVSSATTRSRPIINTRDEPHADAERYRRLHVIVGDSNMSEVTTLLKVGSANLVLEMIEQGVQFRDFSLDNPIRAIREISHDLTGRRTVKLAGGKEASALDIQREYYERAVEHVAKRSPDPMAERVLELWGRTLDAIAAQDLSKIDREIDWAIKHRLLERYQAKHDMDLSNPRIAQLDLAYHDIRRGRGVFDLLQRKGQVERVTDDGEIEAAKDTPPQTTRAKLRGDFIAAAQAAGRDFTVDWVHLKLNDQAQRTVLCKDPFRAVDERVERLIASL.

Glutamate 9 lines the Mg(2+) pocket. ATP is bound at residue arginine 53. Tyrosine 55 is a Mg(2+) binding site. The active-site Proton acceptor is the aspartate 57. Glutamate 63 is a binding site for Mg(2+). ATP contacts are provided by threonine 66 and tryptophan 419.

Belongs to the Pup ligase/Pup deamidase family. Pup-conjugating enzyme subfamily.

The catalysed reaction is ATP + [prokaryotic ubiquitin-like protein]-L-glutamate + [protein]-L-lysine = ADP + phosphate + N(6)-([prokaryotic ubiquitin-like protein]-gamma-L-glutamyl)-[protein]-L-lysine.. The protein operates within protein degradation; proteasomal Pup-dependent pathway. It functions in the pathway protein modification; protein pupylation. Functionally, catalyzes the covalent attachment of the prokaryotic ubiquitin-like protein modifier Pup to the proteasomal substrate proteins, thereby targeting them for proteasomal degradation. This tagging system is termed pupylation. The ligation reaction involves the side-chain carboxylate of the C-terminal glutamate of Pup and the side-chain amino group of a substrate lysine. This chain is Pup--protein ligase, found in Actinosynnema mirum (strain ATCC 29888 / DSM 43827 / JCM 3225 / NBRC 14064 / NCIMB 13271 / NRRL B-12336 / IMRU 3971 / 101).